The chain runs to 293 residues: DNA repair protein RecO (293 aa).

It belongs to the RecO family.

Involved in DNA repair and RecF pathway recombination. In Cyanothece sp. (strain PCC 7425 / ATCC 29141), this protein is DNA repair protein RecO.